A 185-amino-acid polypeptide reads, in one-letter code: NEDD8-conjugating enzyme UBE2F (185 aa).

The tract at residues 1–21 is disordered; it reads MLTLASKLKRDDGVKGSRTTS. The tract at residues 1-29 is interaction with uba3; the sequence is MLTLASKLKRDDGVKGSRTTSTTLDSMRR. One can recognise a UBC core domain in the interval 32-185; the sequence is VRDRLLVKEV…VEDYIKRYAR (154 aa). Catalysis depends on C116, which acts as the Glycyl thioester intermediate.

The protein belongs to the ubiquitin-conjugating enzyme family. UBE2F subfamily.

It catalyses the reaction [E1 NEDD8-activating enzyme]-S-[NEDD8 protein]-yl-L-cysteine + [E2 NEDD8-conjugating enzyme]-L-cysteine = [E1 NEDD8-activating enzyme]-L-cysteine + [E2 NEDD8-conjugating enzyme]-S-[NEDD8-protein]-yl-L-cysteine.. Its pathway is protein modification; protein neddylation. Its function is as follows. Accepts the ubiquitin-like protein NEDD8 from the UBA3-NAE1 E1 complex and catalyzes its covalent attachment to other proteins. Together with the E3 ubiquitin ligase rnf7/rbx2, specifically neddylates cullin-5 (cul5). Does not neddylate cul1, cul2, cul3, cul4a or cul4b. The chain is NEDD8-conjugating enzyme UBE2F (ube2f) from Xenopus laevis (African clawed frog).